The chain runs to 170 residues: Probable Brix domain-containing ribosomal biogenesis protein (170 aa).

The 165-residue stretch at 6-170 (TRIVITSSRD…IKFLKMILEA (165 aa)) folds into the Brix domain.

Functionally, probably involved in the biogenesis of the ribosome. The sequence is that of Probable Brix domain-containing ribosomal biogenesis protein from Saccharolobus solfataricus (strain ATCC 35092 / DSM 1617 / JCM 11322 / P2) (Sulfolobus solfataricus).